Reading from the N-terminus, the 864-residue chain is Leucine--tRNA ligase (864 aa).

The 'HIGH' region motif lies at 57–67; sequence PYPSGNLHMGH. Positions 628–632 match the 'KMSKS' region motif; that stretch reads KMSKS. K631 serves as a coordination point for ATP.

It belongs to the class-I aminoacyl-tRNA synthetase family.

The protein resides in the cytoplasm. The enzyme catalyses tRNA(Leu) + L-leucine + ATP = L-leucyl-tRNA(Leu) + AMP + diphosphate. The protein is Leucine--tRNA ligase of Prochlorococcus marinus (strain MIT 9515).